Reading from the N-terminus, the 207-residue chain is CASP-like protein 1D1 (207 aa).

The Cytoplasmic portion of the chain corresponds to 1-40 (MATVDGTTAPSSGGKTATVALESGGGRYGGPAPAKCSGAN). The helical transmembrane segment at 41–61 (LALRALLFAVSLSALVVLVTA) threads the bilayer. The Extracellular segment spans residues 62 to 89 (KQTVMVPFVIRPPQFILAPVPAKYTHSP). A helical transmembrane segment spans residues 90–110 (ALIYLLAALCATCFYSLITAI). The Cytoplasmic portion of the chain corresponds to 111–124 (SSVRLLSSSACSAK). Residues 125-145 (TLFYLILLDVFYAAVMASATG) form a helical membrane-spanning segment. The Extracellular portion of the chain corresponds to 146 to 176 (TAGAVAWVGLKGNSHTRWNKICNVYGKFCRH). A helical transmembrane segment spans residues 177 to 197 (IGSSTFLALIAAIVLVLLAFL). Topologically, residues 198 to 207 (NAYSLYRRSR) are cytoplasmic.

The protein belongs to the Casparian strip membrane proteins (CASP) family. In terms of assembly, homodimer and heterodimers.

The protein localises to the cell membrane. This chain is CASP-like protein 1D1, found in Oryza sativa subsp. japonica (Rice).